The primary structure comprises 162 residues: Ribonuclease P protein component (162 aa).

Positions 1-62 (MDEKDLATQP…GPPKAGGRLL (62 aa)) are disordered. Basic and acidic residues predominate over residues 21-36 (GPHEDPRRQERAEAQA).

The protein belongs to the RnpA family. Consists of a catalytic RNA component (M1 or rnpB) and a protein subunit.

It catalyses the reaction Endonucleolytic cleavage of RNA, removing 5'-extranucleotides from tRNA precursor.. RNaseP catalyzes the removal of the 5'-leader sequence from pre-tRNA to produce the mature 5'-terminus. It can also cleave other RNA substrates such as 4.5S RNA. The protein component plays an auxiliary but essential role in vivo by binding to the 5'-leader sequence and broadening the substrate specificity of the ribozyme. The sequence is that of Ribonuclease P protein component from Thermus aquaticus.